We begin with the raw amino-acid sequence, 118 residues long: Large ribosomal subunit protein uL24 (118 aa).

This sequence belongs to the universal ribosomal protein uL24 family. In terms of assembly, part of the 50S ribosomal subunit.

Functionally, one of two assembly initiator proteins, it binds directly to the 5'-end of the 23S rRNA, where it nucleates assembly of the 50S subunit. In terms of biological role, one of the proteins that surrounds the polypeptide exit tunnel on the outside of the subunit. In Synechococcus sp. (strain CC9902), this protein is Large ribosomal subunit protein uL24.